A 157-amino-acid chain; its full sequence is Protein Smg homolog (157 aa).

This sequence belongs to the Smg family.

This Shewanella sediminis (strain HAW-EB3) protein is Protein Smg homolog.